A 213-amino-acid polypeptide reads, in one-letter code: Uracil phosphoribosyltransferase (213 aa).

5-phospho-alpha-D-ribose 1-diphosphate-binding positions include arginine 78, arginine 103, and 131 to 139; that span reads DPMLATGGT. Uracil is bound by residues isoleucine 197 and 202–204; that span reads GDA. Aspartate 203 is a binding site for 5-phospho-alpha-D-ribose 1-diphosphate.

Belongs to the UPRTase family. The cofactor is Mg(2+).

It catalyses the reaction UMP + diphosphate = 5-phospho-alpha-D-ribose 1-diphosphate + uracil. The protein operates within pyrimidine metabolism; UMP biosynthesis via salvage pathway; UMP from uracil: step 1/1. With respect to regulation, allosterically activated by GTP. Catalyzes the conversion of uracil and 5-phospho-alpha-D-ribose 1-diphosphate (PRPP) to UMP and diphosphate. The polypeptide is Uracil phosphoribosyltransferase (Bifidobacterium longum (strain DJO10A)).